We begin with the raw amino-acid sequence, 293 residues long: Cytosolic Fe-S cluster assembly factor CFD1 (293 aa).

Residue 25–32 coordinates ATP; the sequence is GKGGVGKS. [4Fe-4S] cluster contacts are provided by Cys-201 and Cys-204. A Phosphoserine modification is found at Ser-291.

Belongs to the Mrp/NBP35 ATP-binding proteins family. NUBP2/CFD1 subfamily. As to quaternary structure, heterotetramer of 2 NBP35 and 2 CFD1 chains. [4Fe-4S] cluster serves as cofactor.

The protein localises to the cytoplasm. In terms of biological role, component of the cytosolic iron-sulfur (Fe/S) protein assembly (CIA) machinery. Required for maturation of extramitochondrial Fe-S proteins. The NBP35-CFD1 heterotetramer forms a Fe-S scaffold complex, mediating the de novo assembly of an Fe-S cluster and its transfer to target apoproteins. Nucleotide binding/hydrolysis seems to be critcal for loading of Fe-S clusters onto CFD1 and NBP35. Required for biogenesis and export of both ribosomal subunits, which may reflect a role in assembly of the Fe/S clusters in RLI1, a protein which performs rRNA processing and ribosome export. The sequence is that of Cytosolic Fe-S cluster assembly factor CFD1 from Saccharomyces cerevisiae (strain ATCC 204508 / S288c) (Baker's yeast).